The primary structure comprises 70 residues: Large ribosomal subunit protein bL31 (70 aa).

C17, C19, C37, and C40 together coordinate Zn(2+).

Belongs to the bacterial ribosomal protein bL31 family. Type A subfamily. Part of the 50S ribosomal subunit. Zn(2+) serves as cofactor.

In terms of biological role, binds the 23S rRNA. The protein is Large ribosomal subunit protein bL31 of Clostridium acetobutylicum (strain ATCC 824 / DSM 792 / JCM 1419 / IAM 19013 / LMG 5710 / NBRC 13948 / NRRL B-527 / VKM B-1787 / 2291 / W).